We begin with the raw amino-acid sequence, 233 residues long: MAKISKRINKIREGVDRNKLYDLSAAIGLVKERAVAKFDETVEIAMNLGVDPRHADQMVRGVVNLPNGTGRTVRVAVFARGDKAEEAKKAGADIVGAEELFEIVNGGKIEFDRCIATPDMMPLVGRLGKVLGPRGMMPNPKVGTVTTDVAAAVAASKGGAVEFRVEKAGIIHAGIGKVSFDNAKLEENIKTFADAVIKAKPSAAKGEYVKRVSISSTMGVGVKVDPSTVKVVD.

The protein belongs to the universal ribosomal protein uL1 family. Part of the 50S ribosomal subunit.

Binds directly to 23S rRNA. The L1 stalk is quite mobile in the ribosome, and is involved in E site tRNA release. Its function is as follows. Protein L1 is also a translational repressor protein, it controls the translation of the L11 operon by binding to its mRNA. The polypeptide is Large ribosomal subunit protein uL1 (Brucella suis (strain ATCC 23445 / NCTC 10510)).